Consider the following 737-residue polypeptide: Prospero homeobox protein 1 (737 aa).

The interaction with RORG stretch occupies residues 1 to 28 (MPDHDSTALLSRQTKRRRVDIGVKRTVG). Polar residues predominate over residues 103 to 135 (KNGGTEPSFQASGLSSTGSEVHQEDICSNSSRD). The segment at 103-147 (KNGGTEPSFQASGLSSTGSEVHQEDICSNSSRDSPPECLSPFGRP) is disordered. A phosphoserine mark is found at serine 177, serine 179, serine 199, serine 291, and serine 295. The segment at 178-221 (HSPSVALRGNENEREMAPQSVSPRESYRENKRKQKLPQQQQQSF) is disordered. The span at 320 to 337 (MAENKPKREGSNKERDHG) shows a compositional bias: basic and acidic residues. Disordered stretches follow at residues 320–344 (MAEN…LQPE) and 444–476 (RKNS…AGFT). Residue lysine 324 forms a Glycyl lysine isopeptide (Lys-Gly) (interchain with G-Cter in SUMO2) linkage. Residues 464 to 476 (LHQSPLSATAGFT) are compositionally biased toward polar residues. Serine 511 and serine 514 each carry phosphoserine. A disordered region spans residues 525–547 (RTKMSSHHLSHHPCSPAHPPSTA). Serine 557 is modified (phosphoserine). One can recognise a Prospero-type homeo domain in the interval 577-635 (QEGLSPNHLKKAKLMFFYTRYPSSNMLKTYFSDVKFNRCITSQLIKWFSNFREFYYIQM). The segment at 577–735 (QEGLSPNHLK…KSPNCLQELL (159 aa)) is homeo-Prospero. The 100-residue stretch at 636-735 (EKYARQAIND…KSPNCLQELL (100 aa)) folds into the Prospero domain. Residues 723–729 (EIFKSPN) form an essential for nuclear localization, interaction with RORG, repression of RORG transcriptional activator activity region.

It belongs to the Prospero homeodomain family. Interacts with RORA and RORG (via AF-2 motif). In terms of tissue distribution, expressed in the young neurons of the subventricular region of the CNS, developing eye lens and pancreas. It is also found in the developing liver, heart and skeletal muscle. In the eye, expressed in the lens and retina at postnatal day 10. In the retina, localized to the inner nuclear layer. In the lens, localized to epithelial and fiber cells.

Its subcellular location is the nucleus. Its function is as follows. Transcription factor involved in developmental processes such as cell fate determination, gene transcriptional regulation and progenitor cell regulation in a number of organs. Plays a critical role in embryonic development and functions as a key regulatory protein in neurogenesis and the development of the heart, eye lens, liver, pancreas and the lymphatic system. Involved in the regulation of the circadian rhythm. Represses: transcription of the retinoid-related orphan receptor RORG, transcriptional activator activity of RORA and RORG and the expression of RORA/G-target genes including core clock components: BMAL1, NPAS2 and CRY1 and metabolic genes: AVPR1A and ELOVL3. This chain is Prospero homeobox protein 1 (Prox1), found in Mus musculus (Mouse).